The chain runs to 619 residues: Magnesium-chelatase 67 kDa subunit (619 aa).

33 to 40 (STVGSGKS) lines the ATP pocket. The interval 273–321 (TRMPEREPSEEEMQQEEPPPPEEQPEQEGEDENAPPDETDSDADEEQEE) is disordered. The segment covering 280–321 (PSEEEMQQEEPPPPEEQPEQEGEDENAPPDETDSDADEEQEE) has biased composition (acidic residues). A VWFA domain is found at 431–619 (LFIFMVDASG…AEQIVEAALS (189 aa)).

Belongs to the Mg-chelatase subunits D/I family.

The enzyme catalyses protoporphyrin IX + Mg(2+) + ATP + H2O = Mg-protoporphyrin IX + ADP + phosphate + 3 H(+). It functions in the pathway porphyrin-containing compound metabolism; bacteriochlorophyll biosynthesis. Functionally, involved in bacteriochlorophyll biosynthesis; introduces a magnesium ion into protoporphyrin IX to yield Mg-protoporphyrin IX. In Chlorobaculum parvum (strain DSM 263 / NCIMB 8327) (Chlorobium vibrioforme subsp. thiosulfatophilum), this protein is Magnesium-chelatase 67 kDa subunit (bchD).